Here is a 561-residue protein sequence, read N- to C-terminus: uncharacterized protein (561 aa).

2 disordered regions span residues 20 to 42 (IQEQATSDTKPESSPDINLGCSP) and 82 to 283 (QIGS…STPF). Basic and acidic residues predominate over residues 103-131 (DKISEDTDQERVVVCESLENKSSSKDKSP). Composition is skewed to basic residues over residues 135–156 (RSPKRHKSSKKHKSSKKHKSSK) and 165–185 (KSSKRHKSHKKKDKSHKKRYR). 3 stretches are compositionally biased toward basic and acidic residues: residues 192–203 (SLSRDRSSSRDR), 211–247 (YSRDRSLSRDRSLSRDRSLSRDRSPPRDRSLSRDRSP), and 259–272 (PLRDRSPTRDRSVS).

This sequence belongs to the mimivirus L41 family.

This is an uncharacterized protein from Acanthamoeba polyphaga (Amoeba).